The chain runs to 298 residues: Fe(II)/2-oxoglutarate-dependent dioxygenase nvfF (298 aa).

Fe cation contacts are provided by H137, D139, and H212.

It belongs to the PhyH family. Homodimer. Fe cation serves as cofactor.

It carries out the reaction fumigatonoid C + 2-oxoglutarate + O2 = novofumigatonin + succinate + CO2 + H2O. Its pathway is secondary metabolite biosynthesis; terpenoid biosynthesis. Fe(II)/2-oxoglutarate-dependent dioxygenase; part of the gene cluster that mediates the biosynthesis of novofumigatonin, a heavily oxygenated meroterpenoid containing a unique orthoester moiety. The first step of the pathway is the synthesis of 3,5-dimethylorsellinic acid (DMOA) by the polyketide synthase nvfA via condensation of one acetyl-CoA starter unit with 3 malonyl-CoA units and 2 methylations. DMOA is then converted to farnesyl-DMOA by the farnesyltransferase nvfB. Epoxydation by FAD-dependent monooxygenase nvfK, followed by a protonation-initiated cyclization catalyzed by the terpene cyclase nvfL leads to the production of asnavolin H. The short chain dehydrogenase nvfC then as a 3-OH dehydrogenase of asnovolin H to yield chemesin D. There are two branches to synthesize asnovolin A from chemesin D. In one branch, chemesin D undergoes Baeyer-Villiger oxidation by nvfH, methylation by nvfJ, and enoyl reduction by the nvfM D enoylreductase that reduces the double bond between C-5'and C-6', to form respectively asnovolin I, asnovolin K, and asnovolin A. In the other branch, the methylation precedes the Baeyer-Villiger oxidation and the enoyl reduction to yield asnovolin A via the asnovolin J intermediate. Asnovolin A is further converted to fumigatonoid A by the Fe(II)/2-oxoglutarate-dependent dioxygenase nvfI that catalyzes an endoperoxidation reaction. The alpha/beta hydrolase nvfD then acts as an epimerase that converts fumigatonoid A to its C-5' epimer, which then undergoes spontaneous or nvfD-catalyzed lactonization. The following step utilizes the ketoreductase nvfG to produce fumigatonoid B. The dioxygenase nvfE further converts fumigatonoid B into fumigatonoid C. Finally the Fe(II)/2-oxoglutarate-dependent dioxygenase nvfF catalyzes two rounds of oxidation to transform fumigatonoid C into the end product, novofumigatonin A. The protein is Fe(II)/2-oxoglutarate-dependent dioxygenase nvfF of Aspergillus novofumigatus (strain IBT 16806).